A 340-amino-acid chain; its full sequence is MTEQQPIAVLGGGSFGTAIANLLAENGQAVRQWMRDPEQAEAIRTRRENPRYLKGVKVHPGVDPVTDLERTLADCQLIFVALPSSALRKVLQPHQAALTDKLLVSLTKGIEAHTFKLMSEILEEIAPQARIGVISGPNLAREIAEHELTATVVASEDDELCARVQAALHGRTFRVYASRDRFGVELGGALKNVYAIMAGLAAAMDMGENTRSMLITRALAEMTRFAVKLGANPMTFLGLAGVGDLIVTCSSPKSRNYQVGHALGEGLSLEEAVSRMGETAEGVNTLKVLKEKSDEMQVYMPLVAGLHAILFEGRTLAQVIQLLMRGEPKTDVDFIPTTGF.

4 residues coordinate NADPH: S14, F15, R35, and K108. Positions 108 and 136 each coordinate sn-glycerol 3-phosphate. A140 serves as a coordination point for NADPH. Residues K191, D244, S254, R255, and N256 each coordinate sn-glycerol 3-phosphate. The active-site Proton acceptor is K191. R255 is an NADPH binding site. E281 serves as a coordination point for NADPH.

The protein belongs to the NAD-dependent glycerol-3-phosphate dehydrogenase family.

It is found in the cytoplasm. The enzyme catalyses sn-glycerol 3-phosphate + NAD(+) = dihydroxyacetone phosphate + NADH + H(+). It catalyses the reaction sn-glycerol 3-phosphate + NADP(+) = dihydroxyacetone phosphate + NADPH + H(+). It participates in membrane lipid metabolism; glycerophospholipid metabolism. Functionally, catalyzes the reduction of the glycolytic intermediate dihydroxyacetone phosphate (DHAP) to sn-glycerol 3-phosphate (G3P), the key precursor for phospholipid synthesis. The polypeptide is Glycerol-3-phosphate dehydrogenase [NAD(P)+] (Pseudomonas aeruginosa (strain ATCC 15692 / DSM 22644 / CIP 104116 / JCM 14847 / LMG 12228 / 1C / PRS 101 / PAO1)).